A 365-amino-acid polypeptide reads, in one-letter code: UDP-N-acetylglucosamine--N-acetylmuramyl-(pentapeptide) pyrophosphoryl-undecaprenol N-acetylglucosamine transferase (365 aa).

Residues 20-22 (TGG), Asn-132, Arg-168, Ser-196, Ile-253, and Gln-298 contribute to the UDP-N-acetyl-alpha-D-glucosamine site.

This sequence belongs to the glycosyltransferase 28 family. MurG subfamily.

It is found in the cell inner membrane. It carries out the reaction di-trans,octa-cis-undecaprenyl diphospho-N-acetyl-alpha-D-muramoyl-L-alanyl-D-glutamyl-meso-2,6-diaminopimeloyl-D-alanyl-D-alanine + UDP-N-acetyl-alpha-D-glucosamine = di-trans,octa-cis-undecaprenyl diphospho-[N-acetyl-alpha-D-glucosaminyl-(1-&gt;4)]-N-acetyl-alpha-D-muramoyl-L-alanyl-D-glutamyl-meso-2,6-diaminopimeloyl-D-alanyl-D-alanine + UDP + H(+). The protein operates within cell wall biogenesis; peptidoglycan biosynthesis. Its function is as follows. Cell wall formation. Catalyzes the transfer of a GlcNAc subunit on undecaprenyl-pyrophosphoryl-MurNAc-pentapeptide (lipid intermediate I) to form undecaprenyl-pyrophosphoryl-MurNAc-(pentapeptide)GlcNAc (lipid intermediate II). This is UDP-N-acetylglucosamine--N-acetylmuramyl-(pentapeptide) pyrophosphoryl-undecaprenol N-acetylglucosamine transferase from Ralstonia nicotianae (strain ATCC BAA-1114 / GMI1000) (Ralstonia solanacearum).